A 160-amino-acid polypeptide reads, in one-letter code: S-ribosylhomocysteine lyase (160 aa).

Positions 57, 61, and 127 each coordinate Fe cation.

This sequence belongs to the LuxS family. As to quaternary structure, homodimer. The cofactor is Fe cation.

The catalysed reaction is S-(5-deoxy-D-ribos-5-yl)-L-homocysteine = (S)-4,5-dihydroxypentane-2,3-dione + L-homocysteine. Functionally, involved in the synthesis of autoinducer 2 (AI-2) which is secreted by bacteria and is used to communicate both the cell density and the metabolic potential of the environment. The regulation of gene expression in response to changes in cell density is called quorum sensing. Catalyzes the transformation of S-ribosylhomocysteine (RHC) to homocysteine (HC) and 4,5-dihydroxy-2,3-pentadione (DPD). The polypeptide is S-ribosylhomocysteine lyase (Streptococcus uberis (strain ATCC BAA-854 / 0140J)).